A 431-amino-acid polypeptide reads, in one-letter code: tRNA(Ile)-lysidine synthase (431 aa).

ATP is bound at residue 25–30; the sequence is SGGPDS.

Belongs to the tRNA(Ile)-lysidine synthase family.

The protein localises to the cytoplasm. It carries out the reaction cytidine(34) in tRNA(Ile2) + L-lysine + ATP = lysidine(34) in tRNA(Ile2) + AMP + diphosphate + H(+). Functionally, ligates lysine onto the cytidine present at position 34 of the AUA codon-specific tRNA(Ile) that contains the anticodon CAU, in an ATP-dependent manner. Cytidine is converted to lysidine, thus changing the amino acid specificity of the tRNA from methionine to isoleucine. The protein is tRNA(Ile)-lysidine synthase of Lactobacillus johnsonii (strain CNCM I-12250 / La1 / NCC 533).